Consider the following 1180-residue polypeptide: RecBCD enzyme subunit RecB (1180 aa).

The segment at 1-852 (MITTIPKSIN…QSGKNHISTK (852 aa)) is DNA-binding and helicase activity, interacts with RecC. A UvrD-like helicase ATP-binding domain is found at 3 to 448 (TTIPKSINVT…YFLDTNWRSS (446 aa)). Residue 24-31 (ASAGTGKT) coordinates ATP. Residues 478 to 745 (SSRINKTTKF…KIVSIHKSKG (268 aa)) form the UvrD-like helicase C-terminal domain. The interval 905–1180 (NYNFTSYSQL…EIIKKLEQIF (276 aa)) is nuclease activity, interacts with RecD and RecA. Residues His964, Asp1075, and Asp1088 each contribute to the Mg(2+) site. Catalysis depends on Asp1088, which acts as the For nuclease activity.

Belongs to the helicase family. UvrD subfamily. In terms of assembly, heterotrimer of RecB, RecC and RecD. All subunits contribute to DNA-binding. Interacts with RecA. Mg(2+) is required as a cofactor.

It catalyses the reaction Exonucleolytic cleavage (in the presence of ATP) in either 5'- to 3'- or 3'- to 5'-direction to yield 5'-phosphooligonucleotides.. The enzyme catalyses Couples ATP hydrolysis with the unwinding of duplex DNA by translocating in the 3'-5' direction.. It carries out the reaction ATP + H2O = ADP + phosphate + H(+). Its function is as follows. A helicase/nuclease that prepares dsDNA breaks (DSB) for recombinational DNA repair. Binds to DSBs and unwinds DNA via a highly rapid and processive ATP-dependent bidirectional helicase activity. Unwinds dsDNA until it encounters a Chi (crossover hotspot instigator) sequence from the 3' direction. Cuts ssDNA a few nucleotides 3' to the Chi site. The properties and activities of the enzyme are changed at Chi. The Chi-altered holoenzyme produces a long 3'-ssDNA overhang and facilitates RecA-binding to the ssDNA for homologous DNA recombination and repair. Holoenzyme degrades any linearized DNA that is unable to undergo homologous recombination. In the holoenzyme this subunit contributes ATPase, 3'-5' helicase, exonuclease activity and loads RecA onto ssDNA. This is RecBCD enzyme subunit RecB from Buchnera aphidicola subsp. Baizongia pistaciae (strain Bp).